An 826-amino-acid chain; its full sequence is Lon protease (826 aa).

The Lon N-terminal domain maps to 26 to 221 (LPMLPVRDVV…AVNGFVSREV (196 aa)). Residue 373-380 (GPPGVGKT) coordinates ATP. The Lon proteolytic domain occupies 609-790 (EPQIGLATGL…NEVLEKALLP (182 aa)). Active-site residues include Ser696 and Lys739. The segment at 788-826 (LLPAEKKKAPPKKKPPKKAAKPKAKKTQPKAKTTEAADK) is disordered. Residues 796-816 (APPKKKPPKKAAKPKAKKTQP) show a composition bias toward basic residues.

It belongs to the peptidase S16 family. Homohexamer. Organized in a ring with a central cavity.

It localises to the cytoplasm. The catalysed reaction is Hydrolysis of proteins in presence of ATP.. Functionally, ATP-dependent serine protease that mediates the selective degradation of mutant and abnormal proteins as well as certain short-lived regulatory proteins. Required for cellular homeostasis and for survival from DNA damage and developmental changes induced by stress. Degrades polypeptides processively to yield small peptide fragments that are 5 to 10 amino acids long. Binds to DNA in a double-stranded, site-specific manner. The protein is Lon protease of Desulfatibacillum aliphaticivorans.